The following is a 310-amino-acid chain: tRNA dimethylallyltransferase (310 aa).

13 to 20 contacts ATP; it reads GPTASGKT. Position 15-20 (15-20) interacts with substrate; it reads TASGKT. 4 interaction with substrate tRNA regions span residues 38-41, 162-166, 243-248, and 276-283; these read DSAL, QRLSR, RCVGYR, and KRQITWLR.

Belongs to the IPP transferase family. Monomer. Mg(2+) serves as cofactor.

It carries out the reaction adenosine(37) in tRNA + dimethylallyl diphosphate = N(6)-dimethylallyladenosine(37) in tRNA + diphosphate. Its function is as follows. Catalyzes the transfer of a dimethylallyl group onto the adenine at position 37 in tRNAs that read codons beginning with uridine, leading to the formation of N6-(dimethylallyl)adenosine (i(6)A). This chain is tRNA dimethylallyltransferase, found in Vibrio atlanticus (strain LGP32) (Vibrio splendidus (strain Mel32)).